The sequence spans 305 residues: MKLVFMGTPDFSVPILDSLIEAGHQVICVYSQPPRPAGRGHKEQLTPVHAFAHERGIPVRTPKSLKPAEAQAEFAALEADVAVVAAYGLILPQAVLDAPRLGCLNVHASLLPRWRGAAPIQRAILAGDAETGITIMQMDAGLDTGAMLSRESILLAPDTTAPWLHDMLAAMGARMIVETLARLEDDEPPAATPQPAEGVTYAHKLAKEEGLLDWRRNAVELDRKVRALNPWPGVWFEMAGERIKVLEAAVTPGSGAPGTVLDDQLTIACGKFALRPLKVQRAGKAPMTASEMLRGHAIPKGTVLG.

Residue 109-112 participates in (6S)-5,6,7,8-tetrahydrofolate binding; it reads SLLP.

It belongs to the Fmt family.

The enzyme catalyses L-methionyl-tRNA(fMet) + (6R)-10-formyltetrahydrofolate = N-formyl-L-methionyl-tRNA(fMet) + (6S)-5,6,7,8-tetrahydrofolate + H(+). Its function is as follows. Attaches a formyl group to the free amino group of methionyl-tRNA(fMet). The formyl group appears to play a dual role in the initiator identity of N-formylmethionyl-tRNA by promoting its recognition by IF2 and preventing the misappropriation of this tRNA by the elongation apparatus. In Paramagnetospirillum magneticum (strain ATCC 700264 / AMB-1) (Magnetospirillum magneticum), this protein is Methionyl-tRNA formyltransferase.